A 130-amino-acid polypeptide reads, in one-letter code: Small ribosomal subunit protein uS8 (130 aa).

It belongs to the universal ribosomal protein uS8 family.

This chain is Small ribosomal subunit protein uS8 (RPS22), found in Kluyveromyces marxianus (Yeast).